The following is a 376-amino-acid chain: Erythronate-4-phosphate dehydrogenase (376 aa).

Substrate contacts are provided by S45 and T67. Residues 127–128, D147, and T176 each bind NAD(+); that span reads QV. The active site involves R209. D233 lines the NAD(+) pocket. E238 is an active-site residue. H255 serves as the catalytic Proton donor. Position 258 (G258) interacts with NAD(+). Y259 is a substrate binding site.

Belongs to the D-isomer specific 2-hydroxyacid dehydrogenase family. PdxB subfamily. As to quaternary structure, homodimer.

The protein resides in the cytoplasm. It carries out the reaction 4-phospho-D-erythronate + NAD(+) = (R)-3-hydroxy-2-oxo-4-phosphooxybutanoate + NADH + H(+). It functions in the pathway cofactor biosynthesis; pyridoxine 5'-phosphate biosynthesis; pyridoxine 5'-phosphate from D-erythrose 4-phosphate: step 2/5. Catalyzes the oxidation of erythronate-4-phosphate to 3-hydroxy-2-oxo-4-phosphonooxybutanoate. The polypeptide is Erythronate-4-phosphate dehydrogenase (Aliivibrio salmonicida (strain LFI1238) (Vibrio salmonicida (strain LFI1238))).